The chain runs to 185 residues: uncharacterized protein (185 aa).

This is an uncharacterized protein from Acanthamoeba polyphaga (Amoeba).